Consider the following 298-residue polypeptide: Porphobilinogen deaminase (298 aa).

At C239 the chain carries S-(dipyrrolylmethanemethyl)cysteine.

This sequence belongs to the HMBS family. Monomer. Requires dipyrromethane as cofactor.

It catalyses the reaction 4 porphobilinogen + H2O = hydroxymethylbilane + 4 NH4(+). The protein operates within porphyrin-containing compound metabolism; protoporphyrin-IX biosynthesis; coproporphyrinogen-III from 5-aminolevulinate: step 2/4. Tetrapolymerization of the monopyrrole PBG into the hydroxymethylbilane pre-uroporphyrinogen in several discrete steps. This Orientia tsutsugamushi (strain Boryong) (Rickettsia tsutsugamushi) protein is Porphobilinogen deaminase.